Here is a 72-residue protein sequence, read N- to C-terminus: Gas vesicle protein A (72 aa).

This sequence belongs to the gas vesicle GvpA family. In terms of assembly, the gas vesicle shell is 2 nm thick and consists of a single layer of this protein. It forms helical ribs nearly perpendicular to the long axis of the vesicle.

It is found in the gas vesicle shell. Its function is as follows. Gas vesicles are hollow, gas filled proteinaceous nanostructures found in some microorganisms. During planktonic growth they allow positioning of the organism at a favorable depth for light or nutrient acquisition. GvpA forms the protein shell. In Pseudanabaena galeata (strain PCC 6901), this protein is Gas vesicle protein A.